A 684-amino-acid chain; its full sequence is Glycine--tRNA ligase beta subunit (684 aa).

Belongs to the class-II aminoacyl-tRNA synthetase family. In terms of assembly, tetramer of two alpha and two beta subunits.

The protein resides in the cytoplasm. The enzyme catalyses tRNA(Gly) + glycine + ATP = glycyl-tRNA(Gly) + AMP + diphosphate. The protein is Glycine--tRNA ligase beta subunit of Pseudomonas entomophila (strain L48).